The sequence spans 207 residues: ATP-dependent Clp protease proteolytic subunit (207 aa).

Catalysis depends on Ser-111, which acts as the Nucleophile. Residue His-136 is part of the active site.

The protein belongs to the peptidase S14 family. As to quaternary structure, fourteen ClpP subunits assemble into 2 heptameric rings which stack back to back to give a disk-like structure with a central cavity, resembling the structure of eukaryotic proteasomes.

The protein resides in the cytoplasm. The enzyme catalyses Hydrolysis of proteins to small peptides in the presence of ATP and magnesium. alpha-casein is the usual test substrate. In the absence of ATP, only oligopeptides shorter than five residues are hydrolyzed (such as succinyl-Leu-Tyr-|-NHMec, and Leu-Tyr-Leu-|-Tyr-Trp, in which cleavage of the -Tyr-|-Leu- and -Tyr-|-Trp bonds also occurs).. Cleaves peptides in various proteins in a process that requires ATP hydrolysis. Has a chymotrypsin-like activity. Plays a major role in the degradation of misfolded proteins. This is ATP-dependent Clp protease proteolytic subunit from Yersinia enterocolitica serotype O:8 / biotype 1B (strain NCTC 13174 / 8081).